The following is a 1574-amino-acid chain: Disco-interacting protein 2 homolog B (1574 aa).

Phosphoserine occurs at positions 9, 50, and 53. The DMAP1-binding domain occupies 12–130 (AVAALPPEVR…PMPTKRRSTF (119 aa)). Residues 31–166 (LSEGDITQKG…AALSAALQQS (136 aa)) form a disordered region. Polar residues predominate over residues 52–62 (YSPQTQETDSI). Positions 69 to 82 (QTPAPTAAQTSAPS) are enriched in low complexity. The residue at position 70 (threonine 70) is a Phosphothreonine. Basic and acidic residues predominate over residues 91-103 (GARDERYRSDIHT). Serine 99 is modified (phosphoserine). Residue threonine 139 is modified to Phosphothreonine. 3 positions are modified to phosphoserine: serine 145, serine 147, and serine 152. Low complexity predominate over residues 154–166 (RRQAALSAALQQS). 3 positions are modified to phosphoserine: serine 177, serine 192, and serine 202. Positions 178-200 (IQGSSTSSSASSTLSHGEVKGTS) are disordered. Positions 181 to 192 (SSTSSSASSTLS) are enriched in low complexity. Residues 217–244 (APPDVTATTSSSSSSLRPANIDLPPSGI) are disordered. A Phosphoserine modification is found at serine 256.

The protein belongs to the DIP2 family. As to quaternary structure, interacts with alpha-tubulin. In terms of tissue distribution, highly expressed in brain and spinal cord (at protein level). In brain, expression is detected in the main olfactory bulb, cortex, lateral ventricle, cornu ammonis 1, cornu ammonis 3, dentate gyrus, striatum, cerebellar cortex and medial habenula. Expressed primarily in neurons including excitatory pyramidal neurons and inhibitory interneurons.

It localises to the cell projection. Its subcellular location is the dendrite. The protein resides in the axon. The protein localises to the perikaryon. Functionally, negatively regulates axonal outgrowth and is essential for normal synaptic transmission. Not required for regulation of axon polarity. Promotes acetylation of alpha-tubulin. The protein is Disco-interacting protein 2 homolog B (Dip2b) of Mus musculus (Mouse).